We begin with the raw amino-acid sequence, 308 residues long: Glycine--tRNA ligase alpha subunit (308 aa).

The protein belongs to the class-II aminoacyl-tRNA synthetase family. As to quaternary structure, tetramer of two alpha and two beta subunits.

The protein resides in the cytoplasm. It catalyses the reaction tRNA(Gly) + glycine + ATP = glycyl-tRNA(Gly) + AMP + diphosphate. The chain is Glycine--tRNA ligase alpha subunit from Brucella abortus (strain 2308).